The sequence spans 185 residues: Ribosome-recycling factor (185 aa).

The tract at residues 163-185 is disordered; it reads LTNEATKKIDAISKDKEKEITEG. Basic and acidic residues predominate over residues 167–185; it reads ATKKIDAISKDKEKEITEG.

This sequence belongs to the RRF family.

The protein localises to the cytoplasm. Its function is as follows. Responsible for the release of ribosomes from messenger RNA at the termination of protein biosynthesis. May increase the efficiency of translation by recycling ribosomes from one round of translation to another. In Latilactobacillus sakei subsp. sakei (strain 23K) (Lactobacillus sakei subsp. sakei), this protein is Ribosome-recycling factor.